The primary structure comprises 394 residues: Cell division protein FtsZ (394 aa).

GTP contacts are provided by residues 21 to 25 (GGGNN), Arg29, 108 to 110 (GTG), Glu139, Arg143, Asn166, and Asp187. Positions 317–394 (DKPSSQGRKA…EERRSRRTRR (78 aa)) are disordered. Low complexity-rich tracts occupy residues 328-346 (STGF…SGAS) and 353-364 (SAHTSHSQSSES). The span at 365–388 (VSERSHTTKDDDIPSFIRNREERR) shows a compositional bias: basic and acidic residues.

The protein belongs to the FtsZ family. Homodimer. Polymerizes to form a dynamic ring structure in a strictly GTP-dependent manner. Interacts directly with several other division proteins.

It is found in the cytoplasm. Essential cell division protein that forms a contractile ring structure (Z ring) at the future cell division site. The regulation of the ring assembly controls the timing and the location of cell division. One of the functions of the FtsZ ring is to recruit other cell division proteins to the septum to produce a new cell wall between the dividing cells. Binds GTP and shows GTPase activity. The protein is Cell division protein FtsZ of Staphylococcus epidermidis (strain ATCC 35984 / DSM 28319 / BCRC 17069 / CCUG 31568 / BM 3577 / RP62A).